The sequence spans 269 residues: Regulatory protein RecX (269 aa).

Belongs to the RecX family.

The protein localises to the cytoplasm. Modulates RecA activity. The chain is Regulatory protein RecX from Listeria monocytogenes serotype 4a (strain HCC23).